Here is a 369-residue protein sequence, read N- to C-terminus: Peptide chain release factor 2 (369 aa).

Residue Gln247 is modified to N5-methylglutamine.

It belongs to the prokaryotic/mitochondrial release factor family. Post-translationally, methylated by PrmC. Methylation increases the termination efficiency of RF2.

Its subcellular location is the cytoplasm. In terms of biological role, peptide chain release factor 2 directs the termination of translation in response to the peptide chain termination codons UGA and UAA. The sequence is that of Peptide chain release factor 2 from Phenylobacterium zucineum (strain HLK1).